The sequence spans 142 residues: ATP synthase epsilon chain (142 aa).

It belongs to the ATPase epsilon chain family. As to quaternary structure, F-type ATPases have 2 components, CF(1) - the catalytic core - and CF(0) - the membrane proton channel. CF(1) has five subunits: alpha(3), beta(3), gamma(1), delta(1), epsilon(1). CF(0) has three main subunits: a, b and c.

The protein resides in the cell inner membrane. Produces ATP from ADP in the presence of a proton gradient across the membrane. The chain is ATP synthase epsilon chain from Koribacter versatilis (strain Ellin345).